Reading from the N-terminus, the 312-residue chain is Ribosomal RNA small subunit methyltransferase H (312 aa).

S-adenosyl-L-methionine is bound by residues 33–35 (SGH), Asp53, Phe80, Asp101, and Gln108.

Belongs to the methyltransferase superfamily. RsmH family.

It is found in the cytoplasm. It catalyses the reaction cytidine(1402) in 16S rRNA + S-adenosyl-L-methionine = N(4)-methylcytidine(1402) in 16S rRNA + S-adenosyl-L-homocysteine + H(+). In terms of biological role, specifically methylates the N4 position of cytidine in position 1402 (C1402) of 16S rRNA. This chain is Ribosomal RNA small subunit methyltransferase H, found in Desulforapulum autotrophicum (strain ATCC 43914 / DSM 3382 / VKM B-1955 / HRM2) (Desulfobacterium autotrophicum).